Here is a 249-residue protein sequence, read N- to C-terminus: tRNA (guanine-N(1)-)-methyltransferase (249 aa).

Residues Gly113 and Ile133–Leu138 each bind S-adenosyl-L-methionine.

This sequence belongs to the RNA methyltransferase TrmD family. In terms of assembly, homodimer.

It is found in the cytoplasm. The catalysed reaction is guanosine(37) in tRNA + S-adenosyl-L-methionine = N(1)-methylguanosine(37) in tRNA + S-adenosyl-L-homocysteine + H(+). Specifically methylates guanosine-37 in various tRNAs. This Aeromonas salmonicida (strain A449) protein is tRNA (guanine-N(1)-)-methyltransferase.